The following is a 953-amino-acid chain: Catenin alpha-2 (953 aa).

Thr-632 carries the phosphothreonine modification. A phosphoserine mark is found at Ser-640, Ser-651, and Ser-901. A compositionally biased stretch (basic and acidic residues) spans 912-927 (EKKPLVKREKPEEFQT). Positions 912 to 939 (EKKPLVKREKPEEFQTRVRRGSQKKHIS) are disordered. Positions 928–938 (RVRRGSQKKHI) are enriched in basic residues. Ser-939 carries the phosphoserine modification.

It belongs to the vinculin/alpha-catenin family. In terms of assembly, interacts with CDH1 and CDH2. Interacts with ZNF639; recruits CTNNA2 to the nucleus. Interacts with F-actin. In terms of tissue distribution, expressed almost exclusively in the nervous system.

The protein resides in the cell membrane. Its subcellular location is the cytoplasm. The protein localises to the cytoskeleton. It localises to the cell junction. It is found in the adherens junction. The protein resides in the cell projection. Its subcellular location is the axon. The protein localises to the nucleus. Its function is as follows. May function as a linker between cadherin adhesion receptors and the cytoskeleton to regulate cell-cell adhesion and differentiation in the nervous system. Required for proper regulation of cortical neuronal migration and neurite growth. It acts as a negative regulator of Arp2/3 complex activity and Arp2/3-mediated actin polymerization. It thereby suppresses excessive actin branching which would impair neurite growth and stability. Regulates morphological plasticity of synapses and cerebellar and hippocampal lamination during development. Functions in the control of startle modulation. The protein is Catenin alpha-2 (Ctnna2) of Mus musculus (Mouse).